A 651-amino-acid polypeptide reads, in one-letter code: PTS system sucrose-specific EIIBCA component (651 aa).

A PTS EIIB type-1 domain is found at 3–86 (HQEVADRVLN…IVKTGLKEVT (84 aa)). Cysteine 25 serves as the catalytic Phosphocysteine intermediate; for EIIB activity. 10 consecutive transmembrane segments (helical) span residues 109 to 129 (VLSD…LLMA), 158 to 178 (MINA…GFSA), 182 to 202 (FGGN…PSLV), 204 to 224 (GYSV…VFGL), 226 to 246 (VAQA…FILA), 264 to 284 (FTPM…VGPV), 303 to 323 (TGWI…ITGL), 345 to 365 (FIFP…LAIF), 404 to 424 (FVFA…FHVL), and 444 to 464 (IPAF…PTFI). The region spanning 121–481 (LVAGGLLMAL…DDRDQVKSPA (361 aa)) is the PTS EIIC type-1 domain. In terms of domain architecture, PTS EIIA type-1 spans 510–614 (DQVFSAEIMG…DPTVMLIVTN (105 aa)). Histidine 562 acts as the Tele-phosphohistidine intermediate; for EIIA activity in catalysis.

It is found in the cell membrane. It catalyses the reaction N(pros)-phospho-L-histidyl-[protein](out) + sucrose = sucrose 6(G)-phosphate(in) + L-histidyl-[protein]. In terms of biological role, the phosphoenolpyruvate-dependent sugar phosphotransferase system (sugar PTS), a major carbohydrate active transport system, catalyzes the phosphorylation of incoming sugar substrates concomitantly with their translocation across the cell membrane. This system is involved in sucrose transport. The polypeptide is PTS system sucrose-specific EIIBCA component (scrA) (Pediococcus pentosaceus).